The chain runs to 87 residues: Small ribosomal subunit protein eS21 (87 aa).

An N-acetylmethionine modification is found at methionine 1.

The protein belongs to the eukaryotic ribosomal protein eS21 family. Component of the small ribosomal subunit (SSU). Mature yeast ribosomes consist of a small (40S) and a large (60S) subunit. The 40S small subunit contains 1 molecule of ribosomal RNA (18S rRNA) and at least 33 different proteins. The large 60S subunit contains 3 rRNA molecules (25S, 5.8S and 5S rRNA) and at least 46 different proteins. Interacts with uS2A and uS2B, strongest interaction is with uS2B.

It localises to the cytoplasm. The protein resides in the nucleus. Component of the ribosome, a large ribonucleoprotein complex responsible for the synthesis of proteins in the cell. The small ribosomal subunit (SSU) binds messenger RNAs (mRNAs) and translates the encoded message by selecting cognate aminoacyl-transfer RNA (tRNA) molecules. The large subunit (LSU) contains the ribosomal catalytic site termed the peptidyl transferase center (PTC), which catalyzes the formation of peptide bonds, thereby polymerizing the amino acids delivered by tRNAs into a polypeptide chain. The nascent polypeptides leave the ribosome through a tunnel in the LSU and interact with protein factors that function in enzymatic processing, targeting, and the membrane insertion of nascent chains at the exit of the ribosomal tunnel. eS21 is required for the processing of the 20S rRNA-precursor to mature 18S rRNA in a late step of the maturation of 40S ribosomal subunits. Has a physiological role leading to 18S rRNA stability. The chain is Small ribosomal subunit protein eS21 (rps21) from Schizosaccharomyces pombe (strain 972 / ATCC 24843) (Fission yeast).